Here is a 1215-residue protein sequence, read N- to C-terminus: Zinc finger SWIM domain-containing protein 6 (1215 aa).

2 disordered regions span residues 1–46 (MAER…RPGP) and 133–161 (AAGGPGDDSGGGGGAGGGGGGGSSSSPAA). Composition is skewed to gly residues over residues 18–38 (PGGGGGGGGSSGGGGGAGGGY) and 133–155 (AAGGPGDDSGGGGGAGGGGGGGS). The segment at 246–283 (CNVAISFDRCKITSVTCSCGNKDIFYCAHVVALSLYRI) adopts an SWIM-type zinc-finger fold.

Functionally, involved in nervous system development, important for striatal morphology and motor regulation. This Homo sapiens (Human) protein is Zinc finger SWIM domain-containing protein 6.